Here is a 62-residue protein sequence, read N- to C-terminus: Small ribosomal subunit protein eS17 (62 aa).

Belongs to the eukaryotic ribosomal protein eS17 family.

In Methanoculleus marisnigri (strain ATCC 35101 / DSM 1498 / JR1), this protein is Small ribosomal subunit protein eS17.